The primary structure comprises 392 residues: MEFVYDVAESAVSPAVIKVIGLGGGGCNAINNMVANNVRGVEFISANTDAQSLAKNHAAKRIQLGTNLTRGLGAGANPDIGRAAAQEDREAIEEAIRGANMLFITTGMGGGTGTGSAPVVAEIAKSLGILTVAVVTRPFAYEGKRVHVAQAGLEQLKEHVDSLIIIPNDKLMTALGEDVTMREAFRAADNVLRDAVAGISEVVTCPSEIINLDFADVKTVMSNRGIAMMGSGYAQGIDRARMATDQAISSPLLDDVTLDGARGVLVNITTAPGCLKMSELSEVMKIVNQSAHPDLECKFGAAEDETMSEDAIRITIIATGLKEKGAVDFVPAREVEAVAPSKQEQSHNVEGMIRTNRGIRTMNLTAADFDNQSVLDDFEIPAILRRQHNSDK.

GTP-binding positions include 24-28 (GGGCN), 111-113 (GTG), Glu-142, Arg-145, and Asp-189.

The protein belongs to the FtsZ family. Homodimer. Polymerizes to form a dynamic ring structure in a strictly GTP-dependent manner. Interacts directly with several other division proteins.

It localises to the cytoplasm. Essential cell division protein that forms a contractile ring structure (Z ring) at the future cell division site. The regulation of the ring assembly controls the timing and the location of cell division. One of the functions of the FtsZ ring is to recruit other cell division proteins to the septum to produce a new cell wall between the dividing cells. Binds GTP and shows GTPase activity. This Neisseria meningitidis serogroup A / serotype 4A (strain DSM 15465 / Z2491) protein is Cell division protein FtsZ.